The following is a 2514-amino-acid chain: MIRQVTDCEASTFYVEFTSMTMDESTGTNGHGVTMGSDTTNGATPNGVYANGTNGTLAHGVLRGAQVPIAICGMACRLPGGLTTPDELWDFLLAKKDARCRVPHSRYDIDSYYSDTKKPGTVSTEYGYFLDESVDVGALDTSFFSMTRTEVERADPQQRLMLEVAREAFEDAGVTHWRGKTIGTYIGNFGEDWLEMFGKETQPWGIHRISGSGDFVVANRLSYEFDLQGPSMTIRTACSSALVALNEACAAISRGDCGSALVGGVNLILAPGMSMAMQEQGVLSSDGSCKTFSADANGYARGEAVTAIFIKPLADALRDGNPIRAVVRATSHNADGKTPTLSQPSTDAQEALMRRAYELGGITDYAETAMVECHGTGTPTGDPIEAAAVARVFGDKGVYIGSVKPNLGHTEAASGLVSLLKMVKALEHRVIPPNIKFTSPNPNIPFAEGKLTVPTDPLPWPKDRLERVSVNSFGIGGANAHVILESAATYNVPVAVHETPETPQLLLFTANSSKSITRMIDGYKAWVEQNPDKVSDLAYTLARRREHLPHRAFAIFRNGVLESVSQPANSKAAKPPSVVMVFTGQGAQWPQMGRDLLRSNDVFRSSIRLLDQHLQTIAGEKPQYSIEEELKKPAKKSRLSLAEFSQPLCTAVQIALVDTLASAGIHPDAVVGHSSGEIAAAYAAGALSAGEAITAAHHRGAVTSRQKRVGTMAAIGMSWAETEKYLVPNVTIACDNSPRSITISGDVDAVKSVVAAIKEAQPQMLARLLQVDKAYHSYHMKEIGEDYQSLINEEVVGREPSALFFSSVTGQVLGPDHSTWSKYWQENLESPVRFREAVTAILKHDVGKNAVFLEVGPHGALAGPLRQIFTQATSSAPYVSVMARNQDCNASFLAAIGALHSLNVDVNLEALFPTGCCLPDLPRYPWNHEGSYWYESRLSKEWRNRRFPYHDLLGARVAESSDGEPAWRNMFHVTNTPWMRDHEVGEHIVFPFCGYIALAGEAIRQLTNVEEGFSVRNIIVSTALVLSEGKPTEMMATFRPHRLTNFLNSAWWEFTVSAYNGRNWTKHCTGEVCAQSSAPEQTQDPAGLPRTLNVRKWYEKMGKGGLNLGGSFQTLETMTTSTSEQRAVGKVVNGRQGDEANYHIHPTVLDATLQILGAAAVKGYARKTKTWLPTSIDKFTVHRCASDMVTSVSAQLSSNFSVVGDGRCTSGGTTVVDAVGIRMSLADGAGAADISDTHAASRCEWRPDIDFLDVHELFRSPANRTDHLRLLEELGDICLLLSQWHFSEASNPIPPHLQQYMAWVGSQSGAIAFRLPSTWTGLDHEAISDRIDSILSQLADTPAAPVANAIHQVCVNMESLLSGESLDSILPGETLTHVHEFLGQVDRREFIQLLSHSKPNLRILEIGTGNGVSLHRDILAELTRPDGEILCAKYTLTAPGYVVATTQEKIFPNMQFASLDISQDPFEQGFEDVGYDLIIAVNALRECKNTEESLANLRKLLSSDGRLLLQELCPSSRWIRYVLGVLPTWWAGPADEPIETPYLSQEEWQTTIAAAGFGDIEAVALDSEEPHQVTTTMVVRQAREAPMKKVTVLVEEEGPAVTHIVSELEKEGYEVTRCRLEDDPPAGQDVMSLLDIEQPFFHGIDEARFLLFKSFLLGLQDRNAGMLWTTHLIDIGCRDPRYGQVLGLARTIRTEQLADLGTCQIDSFDSSASIRGLLRLFAKFQTRQGDEELNPDFEWAIVNGQVQVARFHPFILADELLVSEDSKNEMATLNVRTPGRVNSLHYARHERKDLEKDEVEVEVYCAGLNFRDILVALGIVELPVRLFGIEAAGTVTRVGADVSPDDLQVGDRVVCFCRKDAFSTYTTTLAAVCVRIPDSLTFDQAGTMLIPYFTAIHSMVNVGRVTKGQSVLIHSACGGVGLAAIQVAQMLEADVYVTVGSEEKVKYLMENYHIPRHKIFHSRDRSFVDGVMRETNGRGMDFILNSLSGELLHATWSCVAEFGTLLEIGKRDLIGDGKLDMRPFLANRNYCCVDIDGLWKRIHVARALIFSILDFYDKGYITPLPMTIFPATQTQDAFRFMEKGQHIGRVGVSFKPADGGPQLGLETTKRALTIAFNGSASYLMVGGLGGIGRAVSTWMVDHGARELVYLSRSAGRTPKDDDFVTELQSMGCAVRLVSGDTTKLADVQRAIAAATYPLKGIVQMSMVVANENFTRMSFAEWTASTAPKVQGTWNLHDASVAAGINLDFFVMFSSVSGIVGQAGQANYASGNSFLDAFAQYRNGLGLPASVVDMGAVEDVGWISEHQGMMGKMSRSGFKPVLEQEVIDAMAISMLVHNQARQAIADEALAADSKATSYFVHKNTFLVGLALLIPLHDPSNYVIWKKDRRMASYHNNSTVAAATAASTDVLKTYLSSAKADPSILKSPEAAKLFAVEIGKRLFDLLLKPHEEPNTSWPLLDLGLDSLVALELRAWIKQVFSFDLPMLEMMSIGSLDILGQYAANEVYRITTDNNEG.

Positions 66–486 (QVPIAICGMA…GANAHVILES (421 aa)) constitute a Ketosynthase family 3 (KS3) domain. Residues C238, H374, and H409 each act as for beta-ketoacyl synthase activity in the active site. The Malonyl-CoA:ACP transacylase (MAT) domain occupies 580-904 (MVFTGQGAQW…AIGALHSLNV (325 aa)). Residues 950-1079 (HDLLGARVAE…GEVCAQSSAP (130 aa)) are N-terminal hotdog fold. Residues 950–1240 (HDLLGARVAE…AADISDTHAA (291 aa)) form the PKS/mFAS DH domain. H982 serves as the catalytic Proton acceptor; for dehydratase activity. The interval 1089–1240 (PRTLNVRKWY…AADISDTHAA (152 aa)) is C-terminal hotdog fold. D1150 (proton donor; for dehydratase activity) is an active-site residue. The segment at 1319–1578 (WTGLDHEAIS…EPHQVTTTMV (260 aa)) is methyltransferase (CMet) domain. The region spanning 1779–2092 (GRVNSLHYAR…KGQHIGRVGV (314 aa)) is the Enoyl reductase (ER) domain. A Ketoreductase (KR) domain is found at 2120-2297 (ASYLMVGGLG…ASVVDMGAVE (178 aa)). The Carrier domain maps to 2427-2504 (EAAKLFAVEI…ILGQYAANEV (78 aa)). S2464 is subject to O-(pantetheine 4'-phosphoryl)serine.

Pantetheine 4'-phosphate serves as cofactor.

The catalysed reaction is holo-[ACP] + 8 malonyl-CoA + acetyl-CoA + 5 AH2 + 8 NADPH + 16 H(+) = (3R)-hydroxyoctadeca-4,10-dienoyl-[ACP] + 5 A + 8 CO2 + 8 NADP(+) + 9 CoA + 7 H2O. Its pathway is secondary metabolite biosynthesis. Highly reducing polyketide synthase; part of the gene cluster that mediates the biosynthesis of sphingofungins, bioactive molecules acting as sphingolipid inhibitors via inhibiting serine palmitoyl transferase (SPT). Within the pathway, sphB catalyzes the first step of sphingofungin biosynthesis by condensing 8 units of malonyl-CoA with one starter unit of acetyl-CoA, leading to an C18 polyketide precursor 3-hydroxyoctadeca-4,10-dienoyl-ACP containing one delta-6 desaturation and one delta-12 desaturation. The PKS sphB does not contain any putative thioesterase domain for releasing the nascent polyketide chain and it has been suggested that aminoacyl transferases can facilitate the polyketide chain release. The aminoacyl transferase sphA uses the sphB product to produce 3-keto-presphingofungin by adding an aminomalonate molecule. SphF then reduces the C-3 ketone of 3-keto-presphingofungin which leads to presphingofungin. The cytochrome P450 monooxygenase sphH converts presphingofungin into sphingofungin B1 which is further converted to sphingofungin B by the dioxygenase sphC. SphC is also able to convert presphingofungin into sphingofungin B2. The acetyltransferase sphE acetylates sphingofungin B to produce sphingofungin C, but can also convert sphingofungin B1 into sphingofungin C1 and sphingofungin B2 into sphingofungin C2. Finally, sphingofungin C can be spontaneously converted into sphingofungin D. This is Highly reducing polyketide synthase sphB from Aspergillus fumigatus (strain CBS 144.89 / FGSC A1163 / CEA10) (Neosartorya fumigata).